A 163-amino-acid polypeptide reads, in one-letter code: Flagellar assembly factor FliW (163 aa).

The span at 136 to 156 (PFFETSEKKQSGLQRLERQPE) shows a compositional bias: basic and acidic residues. The segment at 136 to 163 (PFFETSEKKQSGLQRLERQPEKSVPPAG) is disordered.

Belongs to the FliW family. As to quaternary structure, interacts with translational regulator CsrA and flagellin(s).

Its subcellular location is the cytoplasm. Functionally, acts as an anti-CsrA protein, binds CsrA and prevents it from repressing translation of its target genes, one of which is flagellin. Binds to flagellin and participates in the assembly of the flagellum. The chain is Flagellar assembly factor FliW from Geotalea uraniireducens (strain Rf4) (Geobacter uraniireducens).